The sequence spans 284 residues: Tropomyosin (284 aa).

Residues 1 to 38 are disordered; the sequence is MEAIKKKMQAMKLEKDNAVDRAETAEQQSREAALRAEK. Residues 1-284 adopt a coiled-coil conformation; it reads MEAIKKKMQA…DQTFSELTGY (284 aa). The span at 12–38 shows a compositional bias: basic and acidic residues; that stretch reads KLEKDNAVDRAETAEQQSREAALRAEK.

Belongs to the tropomyosin family. In terms of assembly, homodimer.

In terms of biological role, tropomyosin, in association with the troponin complex, plays a central role in the calcium dependent regulation of muscle contraction. In Rhipicephalus microplus (Cattle tick), this protein is Tropomyosin.